The following is a 612-amino-acid chain: C4-dicarboxylate transport sensor protein DctB (612 aa).

Helical transmembrane passes span 23–43 and 292–312; these read SLVILALLLAPLLWPLQYFAE and VLLIGGATLLALLLLLTLLTL. Residues 328 to 376 are a coiled coil; it reads KRQLEERVLERTRELENANAQLQQEVHEREQAQRELMRAQDEVVQAGKL. One can recognise a Histidine kinase domain in the interval 385-599; the sequence is SISHELNQPL…VVRLHLLPGV (215 aa). His388 carries the phosphohistidine; by autocatalysis modification.

Post-translationally, autophosphorylated.

The protein resides in the cell inner membrane. The enzyme catalyses ATP + protein L-histidine = ADP + protein N-phospho-L-histidine.. Functionally, member of the two-component regulatory system DctB/DctD, which regulates C4-dicarboxylate transport via regulation of expression of the dctPQM operon and dctA. DctB functions as a membrane-associated protein kinase that phosphorylates DctD in response to environmental signals. The polypeptide is C4-dicarboxylate transport sensor protein DctB (Pseudomonas aeruginosa (strain ATCC 15692 / DSM 22644 / CIP 104116 / JCM 14847 / LMG 12228 / 1C / PRS 101 / PAO1)).